A 145-amino-acid chain; its full sequence is Transcription antitermination protein NusB (145 aa).

Belongs to the NusB family.

Involved in transcription antitermination. Required for transcription of ribosomal RNA (rRNA) genes. Binds specifically to the boxA antiterminator sequence of the ribosomal RNA (rrn) operons. This is Transcription antitermination protein NusB from Burkholderia ambifaria (strain MC40-6).